The following is a 601-amino-acid chain: Peptide transporter PTR2 (601 aa).

Polar residues predominate over residues 1 to 10; sequence MLNHPSQGSD. Residues 1 to 66 form a disordered region; the sequence is MLNHPSQGSD…DEDFEGPTEE (66 aa). The Extracellular portion of the chain corresponds to 1 to 150; the sequence is MLNHPSQGSD…PVFGGYVADT (150 aa). Over residues 14–28 the composition is skewed to basic and acidic residues; it reads DEKQGDFPVIEEEKT. At tyrosine 37 the chain carries Phosphotyrosine. Residues serine 39 and serine 45 each carry the phosphoserine modification. Over residues 42-53 the composition is skewed to polar residues; the sequence is VANSTERYNLSP. Residues 55–66 show a composition bias toward acidic residues; it reads PEDEDFEGPTEE. A helical membrane pass occupies residues 151-172; the sequence is FWGKYNTICCGTAIYIAGIFIL. Residues 173 to 182 are Cytoplasmic-facing; that stretch reads FITSIPSVGN. Residues 183–202 traverse the membrane as a helical segment; it reads RDSAIGGFIAAIILIGIATG. Residues 203–210 are Extracellular-facing; it reads MIKANLSV. The chain crosses the membrane as a helical span at residues 211-229; the sequence is LIADQLPKRKPSIKVLKSG. At 230-267 the chain is on the cytoplasmic side; the sequence is ERVIVDSNITLQNVFMFFYFMINVGSLSLMATTELEYH. The chain crosses the membrane as a helical span at residues 268–287; it reads KGFWAAYLLPFCFFWIAVVT. Over 288 to 294 the chain is Extracellular; sequence LIFGKKQ. Residues 295 to 316 form a helical membrane-spanning segment; it reads YIQRPIGDKVIAKSFKVCWILT. Residues 317 to 378 are Cytoplasmic-facing; the sequence is KNKFDFNAAK…ISSFITQASM (62 aa). Residues 379 to 399 traverse the membrane as a helical segment; sequence MELHGIPNDFLQAFDSIALII. The Extracellular segment spans residues 400-412; sequence FIPIFEKFVYPFI. Residues 413-429 traverse the membrane as a helical segment; sequence RRYTPLKPITKIFFGFM. Over 430 to 448 the chain is Cytoplasmic; that stretch reads FGSFAMTWAAVLQSFVYKA. Residues 449–466 traverse the membrane as a helical segment; that stretch reads GPWYNEPLGHNTPNHVHV. Residues 467–494 lie on the Extracellular side of the membrane; the sequence is CWQIPAYVLISFSEIFASITGLEYAYSK. A helical transmembrane segment spans residues 495 to 513; it reads APASMKSFIMSIFLLTNAF. Residues 514–526 lie on the Cytoplasmic side of the membrane; sequence GSAIGCALSPVTV. Residues 527 to 547 form a helical membrane-spanning segment; that stretch reads DPKFTWLFTGLAVACFISGCL. The Extracellular portion of the chain corresponds to 548-554; sequence FWLCFRK. The chain crosses the membrane as a helical span at residues 555–577; sequence YNDTEEEMNAMDYEEEDEFDLNP. Residues 578–601 are Cytoplasmic-facing; it reads ISAPKANDIEILEPMESLRSTTKY. The residue at position 594 (serine 594) is a Phosphoserine.

This sequence belongs to the major facilitator superfamily. Proton-dependent oligopeptide transporter (POT/PTR) (TC 2.A.17) family.

It is found in the membrane. In terms of biological role, uptake of small peptides. In Saccharomyces cerevisiae (strain ATCC 204508 / S288c) (Baker's yeast), this protein is Peptide transporter PTR2 (PTR2).